We begin with the raw amino-acid sequence, 461 residues long: Homocitrate synthase (461 aa).

In terms of domain architecture, Pyruvate carboxyltransferase spans 4-259 (VGILDSTLRE…IEVVKLDKLQ (256 aa)). Position 12 (R12) interacts with 2-oxoglutarate. E13 is a binding site for Mg(2+). H76, R136, and T170 together coordinate 2-oxoglutarate. H198 and H200 together coordinate Mg(2+). The active-site Proton acceptor is H292.

Belongs to the alpha-IPM synthase/homocitrate synthase family. Homocitrate synthase LYS20/LYS21 subfamily. It depends on Mg(2+) as a cofactor. The cofactor is Mn(2+).

It carries out the reaction acetyl-CoA + 2-oxoglutarate + H2O = (2R)-homocitrate + CoA + H(+). It functions in the pathway amino-acid biosynthesis; L-lysine biosynthesis via AAA pathway; L-alpha-aminoadipate from 2-oxoglutarate: step 1/5. In terms of biological role, catalyzes the aldol-type condensation of 2-oxoglutarate with acetyl-CoA to yield homocitrate. Carries out the first step of the alpha-aminoadipate (AAA) lysine biosynthesis pathway. This chain is Homocitrate synthase, found in Saccharolobus islandicus (strain Y.N.15.51 / Yellowstone #2) (Sulfolobus islandicus).